The chain runs to 278 residues: MITRFAPSPTGPLHLGHAFAAILAHDMARAAGGRFLLRIEDIDRARAKPQWEAQLLDDLRWLGITWDGPVLRQSDRLPLYRDALERLWQRGLVYSCTCSRRDIEQAASAPQEGAPLGPDGIVYPGSCRDKGRPRPGQALPETALRLRMDLAATETGFEETGPAHRGWHEIRPETMIRAVGDVVLARREMGTSYHLSVVLDDAAQGVTHVTRGEDLFEATCIHVTLQRLLGLPVPVYHHHGLIRDDAGKRLAKRDNARALSKYRAEGASPADIRRLIGL.

Residues 4 to 8 (RFAPS) and E40 each bind L-glutamate. Residues 7–17 (PSPTGPLHLGH) carry the 'HIGH' region motif. C96, C98, Y123, and C127 together coordinate Zn(2+). L-glutamate is bound by residues Y193 and R211. The 'KMSKS' region signature appears at 249–253 (RLAKR). ATP is bound at residue K252.

The protein belongs to the class-I aminoacyl-tRNA synthetase family. GluQ subfamily. Requires Zn(2+) as cofactor.

Catalyzes the tRNA-independent activation of glutamate in presence of ATP and the subsequent transfer of glutamate onto a tRNA(Asp). Glutamate is transferred on the 2-amino-5-(4,5-dihydroxy-2-cyclopenten-1-yl) moiety of the queuosine in the wobble position of the QUC anticodon. The protein is Glutamyl-Q tRNA(Asp) synthetase (gluQ) of Rhodobacter capsulatus (strain ATCC BAA-309 / NBRC 16581 / SB1003).